We begin with the raw amino-acid sequence, 413 residues long: uncharacterized protein (413 aa).

2 disordered regions span residues E108–S158 and D232–A257. S115 is modified (phosphoserine). A compositionally biased stretch (polar residues) spans S127–H139. S141 carries the phosphoserine modification. Residue K239 forms a Glycyl lysine isopeptide (Lys-Gly) (interchain with G-Cter in SUMO2) linkage. Phosphoserine is present on residues S269 and S296. The interval R290–D336 is disordered. Over residues T302–P318 the composition is skewed to low complexity. Residue S342 is modified to Phosphoserine.

This is an uncharacterized protein from Mus musculus (Mouse).